The chain runs to 1680 residues: GRIP and coiled-coil domain-containing protein 2 (1680 aa).

N-acetylmethionine is present on M1. Over residues 1-14 (MEDSAPDAVAAAPS) the composition is skewed to low complexity. Disordered stretches follow at residues 1 to 23 (MEDS…KLET) and 1468 to 1522 (KSEP…SSAG). Positions 31–1614 (KFAKKQMMLL…REKSVANLEY (1584 aa)) form a coiled coil. Residues 1469-1484 (SEPSTRSPASSHQPSK) show a composition bias toward polar residues. Phosphoserine is present on residues S1475 and S1479. The mediates interaction with RAB6A stretch occupies residues 1570-1609 (HLNGLLRETEATNAILMEQIKLLKSEIRRLERNQEREKSV). Residues 1570–1680 (HLNGLLRETE…SYLHSWSGLR (111 aa)) are mediates interaction with RAB9A. Residues 1605–1655 (REKSVANLEYLKNVLLRFIFLKPGSERERLLPVIDTMLQLSPEEKGKLATV) form the GRIP domain.

As to quaternary structure, homodimer. Interacts (via GRIP domain) with RAB6A (preferentially in its GTP-bound form). May interact (RAB6A-dependent) with ARL1; might be involved in GCC2 Golgi localization. Interacts (probably via GRIP domain) with RAB9A (preferentially in its GTP-bound form). Interacts with CLASP1 and CLASP2; recruits both proteins to membranes of the TGN. Interacts with STX16.

The protein localises to the cytoplasm. It is found in the golgi apparatus. The protein resides in the trans-Golgi network membrane. In terms of biological role, golgin which probably tethers transport vesicles to the trans-Golgi network (TGN) and regulates vesicular transport between the endosomes and the Golgi. As a RAB9A effector it is involved in recycling of the mannose 6-phosphate receptor from the late endosomes to the TGN. May also play a role in transport between the recycling endosomes and the Golgi. Required for maintenance of the Golgi structure, it is involved in the biogenesis of noncentrosomal, Golgi-associated microtubules through recruitment of CLASP1 and CLASP2. In Mus musculus (Mouse), this protein is GRIP and coiled-coil domain-containing protein 2 (Gcc2).